The following is a 480-amino-acid chain: Glutamyl-tRNA(Gln) amidotransferase subunit A (480 aa).

Active-site charge relay system residues include K79 and S154. The segment at N133 to G156 is disordered. Catalysis depends on S178, which acts as the Acyl-ester intermediate.

It belongs to the amidase family. GatA subfamily. As to quaternary structure, heterotrimer of A, B and C subunits.

It carries out the reaction L-glutamyl-tRNA(Gln) + L-glutamine + ATP + H2O = L-glutaminyl-tRNA(Gln) + L-glutamate + ADP + phosphate + H(+). Its function is as follows. Allows the formation of correctly charged Gln-tRNA(Gln) through the transamidation of misacylated Glu-tRNA(Gln) in organisms which lack glutaminyl-tRNA synthetase. The reaction takes place in the presence of glutamine and ATP through an activated gamma-phospho-Glu-tRNA(Gln). In Koribacter versatilis (strain Ellin345), this protein is Glutamyl-tRNA(Gln) amidotransferase subunit A.